A 685-amino-acid polypeptide reads, in one-letter code: MVLLPGSMLLTSNLHHLRHQMSPGSWKRLIILLSCVFGGGGTSLQNKNPHQPMTLTWQVLSQTGDVVWDTKAVQPPWTWWPTLKPDVCALAASLESWDIPGTDVSSSKRVRPPDSDYTAAYKQITWGAIGCSYPRARTRMASSTFYVCPRDGRTLSEARRCGGLESLYCKEWDCETTGTGYWLSKSSKDLITVKWDQNSEWTQKFQQCHQTGWCNPLKIDFTDKGKLSKDWITGKTWGLRFYVSGHPGVQFTIRLKITNMPAVAVGPDLVLVEQGPPRTSLALPPPLPPREAPPPSLPDSNSTALATSAQTPTVRKTIVTLNTPPPTTGDRLFDLVQGAFLTLNATNPGATESCWLCLAMGPPYYEAIASSGEVAYSTDLDRCRWGTQGKLTLTEVSGHGLCIGKVPFTHQHLCNQTLSINSSGDHQYLLPSNHSWWACSTGLTPCLSTSVFNQTRDFCIQVQLIPRIYYYPEEVLLQAYDNSHPRTKREAVSLTLAVLLGLGITAGIGTGSTALIKGPIDLQQGLTSLQIAIDADLRALQDSVSKLEDSLTSLSEVVLQNRRGLDLLFLKEGGLCAALKEECCFYIDHSGAVRDSMKKLKEKLDKRQLERQKSQNWYEGWFNNSPWFTTLLSTIAGPLLLLLLLLILGPCIINKLVQFINDRISAVKILVLRQKYQALENEGNL.

A signal peptide spans 1–41; it reads MVLLPGSMLLTSNLHHLRHQMSPGSWKRLIILLSCVFGGGG. Residues 42–632 lie on the Extracellular side of the membrane; it reads TSLQNKNPHQ…NNSPWFTTLL (591 aa). 2 disulfides stabilise this stretch: C148-C169 and C161-C174. The segment at 276 to 309 is disordered; that stretch reads PPRTSLALPPPLPPREAPPPSLPDSNSTALATSA. A compositionally biased stretch (pro residues) spans 283 to 297; it reads LPPPLPPREAPPPSL. Positions 299-309 are enriched in polar residues; the sequence is DSNSTALATSA. 2 N-linked (GlcNAc...) asparagine; by host glycosylation sites follow: N301 and N344. 3 disulfide bridges follow: C354–C357, C354–C584, and C576–C583. The CXXC motif lies at 354 to 357; sequence CWLC. N-linked (GlcNAc...) asparagine; by host glycans are attached at residues N415, N421, N433, and N453. Residues 492-512 form a fusion peptide region; sequence VSLTLAVLLGLGITAGIGTGS. 2 coiled-coil regions span residues 520 to 570 and 580 to 616; these read IDLQ…LLFL and KEEC…KSQN. Residues 559–575 form an immunosuppression region; the sequence is LQNRRGLDLLFLKEGGL. The short motif at 576–584 is the CX6CC element; it reads CAALKEECC. A helical transmembrane segment spans residues 633-653; that stretch reads STIAGPLLLLLLLLILGPCII. C651 carries the S-palmitoyl cysteine; by host lipid modification. Residues 654–685 are Cytoplasmic-facing; it reads NKLVQFINDRISAVKILVLRQKYQALENEGNL. The short motif at 676–679 is the YXXL motif; contains endocytosis signal element; that stretch reads YQAL.

As to quaternary structure, the mature envelope protein (Env) consists of a trimer of SU-TM heterodimers attached by a labile interchain disulfide bond. Specific enzymatic cleavages in vivo yield mature proteins. Envelope glycoproteins are synthesized as an inactive precursor that is N-glycosylated and processed likely by host cell furin or by a furin-like protease in the Golgi to yield the mature SU and TM proteins. The cleavage site between SU and TM requires the minimal sequence [KR]-X-[KR]-R. The R-peptide is released from the C-terminus of the cytoplasmic tail of the TM protein upon particle formation as a result of proteolytic cleavage by the viral protease. Cleavage of this peptide is required for TM to become fusogenic. In terms of processing, the CXXC motif is highly conserved across a broad range of retroviral envelope proteins. It is thought to participate in the formation of a labile disulfide bond possibly with the CX6CC motif present in the transmembrane protein. Isomerization of the intersubunit disulfide bond to an SU intrachain disulfide bond is thought to occur upon receptor recognition in order to allow membrane fusion. Post-translationally, the transmembrane protein is palmitoylated. The R-peptide is palmitoylated.

It localises to the virion membrane. It is found in the host cell membrane. Functionally, the surface protein (SU) attaches the virus to the host cell by binding to its receptor. This interaction triggers the refolding of the transmembrane protein (TM) and is thought to activate its fusogenic potential by unmasking its fusion peptide. Fusion occurs at the host cell plasma membrane. The transmembrane protein (TM) acts as a class I viral fusion protein. Under the current model, the protein has at least 3 conformational states: pre-fusion native state, pre-hairpin intermediate state, and post-fusion hairpin state. During viral and target cell membrane fusion, the coiled coil regions (heptad repeats) assume a trimer-of-hairpins structure, positioning the fusion peptide in close proximity to the C-terminal region of the ectodomain. The formation of this structure appears to drive apposition and subsequent fusion of viral and target cell membranes. Membranes fusion leads to delivery of the nucleocapsid into the cytoplasm. The sequence is that of Envelope glycoprotein (env) from Gibbon ape leukemia virus (GALV).